The primary structure comprises 245 residues: Probable phosphatase YpAngola_A2446 (245 aa).

Positions 7, 9, 15, 40, 73, 101, 131, 192, and 194 each coordinate Zn(2+).

The protein belongs to the PHP family. As to quaternary structure, homotrimer. Zn(2+) is required as a cofactor.

The protein is Probable phosphatase YpAngola_A2446 of Yersinia pestis bv. Antiqua (strain Angola).